Reading from the N-terminus, the 175-residue chain is Glutamyl-tRNA(Gln) amidotransferase subunit C, mitochondrial (175 aa).

Belongs to the GatC family. As to quaternary structure, subunit of the heterotrimeric GatCAB amidotransferase (AdT) complex, composed of A, B and C subunits.

It localises to the mitochondrion. The enzyme catalyses L-glutamyl-tRNA(Gln) + L-glutamine + ATP + H2O = L-glutaminyl-tRNA(Gln) + L-glutamate + ADP + phosphate + H(+). In terms of biological role, allows the formation of correctly charged Gln-tRNA(Gln) through the transamidation of misacylated Glu-tRNA(Gln) in the mitochondria. The reaction takes place in the presence of glutamine and ATP through an activated gamma-phospho-Glu-tRNA(Gln). In Caenorhabditis elegans, this protein is Glutamyl-tRNA(Gln) amidotransferase subunit C, mitochondrial.